The sequence spans 509 residues: Ribonuclease Y (509 aa).

The helical transmembrane segment at 5-25 (IAGVSGIAGAAVGAGACYLWL) threads the bilayer. Residues 199–265 (LINLVNLPSD…TRVIEILIED (67 aa)) form the KH domain. The HD domain maps to 325–418 (ALAHTLEVAK…VCAADTLSAA (94 aa)).

The protein belongs to the RNase Y family.

It is found in the cell membrane. In terms of biological role, endoribonuclease that initiates mRNA decay. The protein is Ribonuclease Y of Sulfurovum sp. (strain NBC37-1).